The primary structure comprises 378 residues: Quinolinate synthase (378 aa).

Iminosuccinate-binding residues include histidine 59 and serine 80. Position 125 (cysteine 125) interacts with [4Fe-4S] cluster. Iminosuccinate is bound by residues 151-153 (YAN) and serine 168. A [4Fe-4S] cluster-binding site is contributed by cysteine 212. Iminosuccinate contacts are provided by residues 238-240 (HPE) and threonine 255. Cysteine 309 serves as a coordination point for [4Fe-4S] cluster.

It belongs to the quinolinate synthase family. Type 1 subfamily. [4Fe-4S] cluster is required as a cofactor.

It localises to the cytoplasm. It catalyses the reaction iminosuccinate + dihydroxyacetone phosphate = quinolinate + phosphate + 2 H2O + H(+). Its pathway is cofactor biosynthesis; NAD(+) biosynthesis; quinolinate from iminoaspartate: step 1/1. Functionally, catalyzes the condensation of iminoaspartate with dihydroxyacetone phosphate to form quinolinate. The chain is Quinolinate synthase from Burkholderia pseudomallei (strain 1106a).